Here is a 115-residue protein sequence, read N- to C-terminus: Probable non-functional immunoglobulin heavy variable 3-38-3 (115 aa).

A signal peptide spans 1-19; the sequence is MQFVLSWVFLVAILKGVQC. The interval 20 to 44 is framework-1; that stretch reads EVQLVESRGVLVQPGGSLRLSCAAS. An Ig-like domain is found at 31–115; that stretch reads VQPGGSLRLS…EDTAVYYCKK (85 aa). Cysteines 41 and 113 form a disulfide. The segment at 45–52 is complementarity-determining-1; it reads GFTVSSNE. Positions 53-69 are framework-2; the sequence is MSWVRQAPGKGLEWVSS. The tract at residues 70–75 is complementarity-determining-2; it reads ISGGST. Residues 76–113 are framework-3; it reads YYADSRKGRFTISRDNSKNTLHLQMNSLRAEDTAVYYC. The interval 114-115 is complementarity-determining-3; it reads KK.

In terms of assembly, immunoglobulins are composed of two identical heavy chains and two identical light chains; disulfide-linked.

It localises to the secreted. It is found in the cell membrane. Probable non-functional open reading frame (ORF) of V region of the variable domain of immunoglobulin heavy chains. Non-functional ORF generally cannot participate in the synthesis of a productive immunoglobulin chain due to altered V-(D)-J or switch recombination and/or splicing site (at mRNA level) and/or conserved amino acid change (protein level). Immunoglobulins, also known as antibodies, are membrane-bound or secreted glycoproteins produced by B lymphocytes. In the recognition phase of humoral immunity, the membrane-bound immunoglobulins serve as receptors which, upon binding of a specific antigen, trigger the clonal expansion and differentiation of B lymphocytes into immunoglobulins-secreting plasma cells. Secreted immunoglobulins mediate the effector phase of humoral immunity, which results in the elimination of bound antigens. The antigen binding site is formed by the variable domain of one heavy chain, together with that of its associated light chain. Thus, each immunoglobulin has two antigen binding sites with remarkable affinity for a particular antigen. The variable domains are assembled by a process called V-(D)-J rearrangement and can then be subjected to somatic hypermutations which, after exposure to antigen and selection, allow affinity maturation for a particular antigen. The sequence is that of Probable non-functional immunoglobulin heavy variable 3-38-3 from Homo sapiens (Human).